Here is a 1236-residue protein sequence, read N- to C-terminus: MFPYPQLNFPPVYPTNPMAYRDPNPPRCRWRPFRPPLAAQIEDLRRSIANLTFKQRSPNPPPGPPPKKKKSAPKPKPTQPKKKKQQAKKTKRKPKPGKRQRMCMKLESDKTFPIMLNGQVNGYACVVGGRLMKPLHVEGKIDNEQLAAVKLKKASMYDLEYGDVPQNMKSDTLQYTSDKPPGFYNWHHGAVQYENGRFTVPRGVGGKGDSGRPILDNRGRVVAIVLGGANEGTRTALSVVTWNQKGVTIKDTPEGSEPWSLVTALCVLSNVTFPCDKPPVCYSLAPERTLDVLEENVDNPNYDTLLENVLKCPSRRPKRSITDDFTLTSPYLGFCPYCRHSAPCFSPIKIENVWDESDDGSIRIQVSAQFGYNQAGTADVTKFRYMSFDHDHDIKEDSMDKIAISTSGPCRRLGHKGYFLLAQCPPGDSVTVSITSGASENSCTVEKKIRRKFVGREEYLFPPVHGKLVKCHVYDHLKETSAGYITMHRPGPHAYKSYLEEASGEVYIKPPSGKNVTYECKCGDYSTGIVSTRTKMNGCTKAKQCIAYKSDQTKWVFNSPDLIRHTDHSVQGKLHIPFRLTPTVCPVPLAHTPTVTKWFKGITLHLTATRPTLLTTRKLGLRADATAEWITGTTSRNFSVGREGLEYVWGNHEPVRVWAQESAPGDPHGWPHEIIIHYYHRHPVYTVIVLCGVALAILVGTASSAACIAKARRDCLTPYALAPNATVPTALAVLCCIRPTNAETFGETLNHLWFNNQPFLWAQLCIPLAALVILFRCFSCCMPFLLVAGVCLGKVDAFEHATTVPNVPGIPYKALVERAGYAPLNLEITVVSSELTPSTNKEYVTCRFHTVIPSPQVKCCGSLECKASSKADYTCRVFGGVYPFMWGGAQCFCDSENTQLSEAYVEFAPDCTIDHAVALKVHTAALKVGLRIVYGNTTAHLDTFVNGVTPGSSRDLKVIAGPISAAFSPFDHKVVIRKGLVYNYDFPEYGAMKPGAFGDIQASSLDATDIVARTDIRLLKPSVKNIHVPYTQAVSGYEMWKNNSGRPLQETAPFGCKIEVEPLRASNCAYGHIPISIDIPDAAFVRSSESPTILEVSCTVADCIYSADFGGSLTLQYKADREGHCPVHSHSTTAVLKEATTHVTAVGSITLHFSTSSPQANFIVSLCGKKTTCNAECKPPADHIIGEPHKVDQEFQAAVSKTSWNWLLALFGGASSLIVVGLIVLVCSSMLINTRR.

The necessary for nucleocapsid assembly and virus assembly stretch occupies residues 1 to 36; it reads MFPYPQLNFPPVYPTNPMAYRDPNPPRCRWRPFRPP. Positions 37–70 are host transcription inhibition; it reads LAAQIEDLRRSIANLTFKQRSPNPPPGPPPKKKK. The Supraphysiological nuclear export signal motif lies at 44–51; it reads LRRSIANL. The interval 44–103 is disordered; sequence LRRSIANLTFKQRSPNPPPGPPPKKKKSAPKPKPTQPKKKKQQAKKTKRKPKPGKRQRMC. Basic residues predominate over residues 66-102; it reads PKKKKSAPKPKPTQPKKKKQQAKKTKRKPKPGKRQRM. Positions 67 to 70 match the Nuclear localization signal motif; it reads KKKK. The segment at 83–111 is binding to the viral RNA; it reads KKQQAKKTKRKPKPGKRQRMCMKLESDKT. The tract at residues 96 to 110 is ribosome-binding; that stretch reads PGKRQRMCMKLESDK. S108 bears the Phosphoserine mark. One can recognise a Peptidase S3 domain in the interval 110 to 259; the sequence is KTFPIMLNGQ…KDTPEGSEPW (150 aa). T111 is subject to Phosphothreonine. Residue H136 is the Charge relay system of the active site. An interaction with spike glycoprotein E2 region spans residues 152 to 157; it reads KKASMY. Catalysis depends on charge relay system residues D158 and S210. The tract at residues 244–248 is interaction with spike glycoprotein E2; sequence QKGVT. The segment at 260 to 271 is functions as an uncleaved signal peptide for the precursor of protein E3/E2; the sequence is SLVTALCVLSNV. Over 260 to 687 the chain is Extracellular; sequence SLVTALCVLS…YYHRHPVYTV (428 aa). Cystine bridges form between C266/C275, C335/C443, C338/C344, C410/C424, C471/C585, C520/C545, and C522/C539. N270 is a glycosylation site (N-linked (GlcNAc...) asparagine; by host). N-linked (GlcNAc...) asparagine; by host glycosylation occurs at N515. N-linked (GlcNAc...) asparagine; by host glycosylation occurs at N637. A helical membrane pass occupies residues 688 to 708; the sequence is IVLCGVALAILVGTASSAACI. Residues 709–742 lie on the Cytoplasmic side of the membrane; sequence AKARRDCLTPYALAPNATVPTALAVLCCIRPTNA. Residues 710–714 are interaction with the capsid protein; it reads KARRD. Residues C715, C735, and C736 are each lipidated (S-palmitoyl cysteine; by host). The cysteines at positions 715 and 736 are disulfide-linked. The segment at 717–737 is transient transmembrane before p62-6K protein processing; that stretch reads TPYALAPNATVPTALAVLCCI. Residues 743 to 767 are Extracellular-facing; that stretch reads ETFGETLNHLWFNNQPFLWAQLCIP. The next 2 membrane-spanning stretches (helical) occupy residues 768–788 and 789–809; these read LAAL…LLVA and GVCL…NVPG. Residues 810–1205 lie on the Extracellular side of the membrane; sequence IPYKALVERA…QAAVSKTSWN (396 aa). 4 disulfide bridges follow: C846-C911, C859-C891, C860-C893, and C865-C875. The E1 fusion peptide loop stretch occupies residues 881-898; the sequence is VYPFMWGGAQCFCDSENT. N-linked (GlcNAc...) asparagine; by host glycosylation is found at N936, N1042, and N1067. Cystine bridges form between C1056–C1068, C1098–C1173, C1103–C1177, and C1125–C1167. Residues 1206 to 1226 form a helical membrane-spanning segment; it reads WLLALFGGASSLIVVGLIVLV. The Cytoplasmic portion of the chain corresponds to 1227-1236; it reads CSSMLINTRR.

Homodimer. Homomultimer. Interacts with host karyopherin KPNA4; this interaction allows the nuclear import of the viral capsid protein. Interacts with spike glycoprotein E2. Interacts with host IRAK1; the interaction leads to inhibition of IRAK1-dependent signaling. Part of a tetrameric complex composed of host CRM1, host importin alpha/beta dimer and the viral capsid; this complex blocks the receptor-mediated transport through the nuclear pore. Interacts with host phosphatase PPP1CA; this interaction dephosphorylates the capsid protein, which increases its ability to bind to the viral genome. As to quaternary structure, the precursor of protein E3/E2 and E1 form a heterodimer shortly after synthesis. In terms of assembly, interacts with spike glycoprotein E2. The precursor of protein E3/E2 and E1 form a heterodimer shortly after synthesis. Processing of the precursor of protein E3/E2 into E2 and E3 results in a heterodimer of the spike glycoproteins E2 and E1. Spike at virion surface are constituted of three E2-E1 heterodimers. After target cell attachment and endocytosis, E1 change conformation to form homotrimers. Interacts with 6K protein. Interacts with spike glycoprotein E1. Processing of the precursor of protein E3/E2 into E2 and E3 results in a heterodimer of the spike glycoproteins E2 and E1. Spike at virion surface are constituted of a trimer of E2-E1 heterodimers. Interacts with 6K protein. The E2-E1 heterodimer interacts with host PCDH10 (via domain Cadherin 1); this interaction mediates viral entry to the host cell. As to quaternary structure, oligomer. Interacts with spike glycoprotein E1. Interacts with spike glycoprotein E2. Post-translationally, structural polyprotein: Specific enzymatic cleavages in vivo yield mature proteins. Capsid protein is auto-cleaved during polyprotein translation, unmasking a signal peptide at the N-terminus of the precursor of E3/E2. The remaining polyprotein is then targeted to the host endoplasmic reticulum, where host signal peptidase cleaves it into pE2, 6K and E1 proteins. pE2 is further processed to mature E3 and E2 by host furin in trans-Golgi vesicle. Phosphorylated on serine and threonine residues. In terms of processing, palmitoylated via thioester bonds. These palmitoylations may induce disruption of the C-terminus transmembrane. This would result in the reorientation of E2 C-terminus from lumenal to cytoplasmic side. Post-translationally, N-glycosylated. Palmitoylated via thioester bonds.

The protein localises to the virion. Its subcellular location is the host cytoplasm. The protein resides in the host cell membrane. It is found in the host nucleus. It localises to the virion membrane. The protein localises to the host Golgi apparatus. Its subcellular location is the host trans-Golgi network. The protein resides in the host endoplasmic reticulum. The enzyme catalyses Autocatalytic release of the core protein from the N-terminus of the togavirus structural polyprotein by hydrolysis of a -Trp-|-Ser- bond.. Functionally, forms an icosahedral capsid with a T=4 symmetry composed of 240 copies of the capsid protein surrounded by a lipid membrane through which penetrate 80 spikes composed of trimers of E1-E2 heterodimers. The capsid protein binds to the viral RNA genome at a site adjacent to a ribosome binding site for viral genome translation following genome release. Possesses a protease activity that results in its autocatalytic cleavage from the nascent structural protein. Following its self-cleavage, the capsid protein transiently associates with ribosomes, and within several minutes the protein binds to viral RNA and rapidly assembles into icosahedric core particles. The resulting nucleocapsid eventually associates with the cytoplasmic domain of the spike glycoprotein E2 at the cell membrane, leading to budding and formation of mature virions. In case of infection, new virions attach to target cells and after clathrin-mediated endocytosis their membrane fuses with the host endosomal membrane. This leads to the release of the nucleocapsid into the cytoplasm, followed by an uncoating event necessary for the genomic RNA to become accessible. The uncoating might be triggered by the interaction of capsid proteins with ribosomes. Binding of ribosomes would release the genomic RNA since the same region is genomic RNA-binding and ribosome-binding. Specifically inhibits interleukin-1 receptor-associated kinase 1/IRAK1-dependent signaling during viral entry, representing a means by which the alphaviruses may evade innate immune detection and activation prior to viral gene expression. Inhibits host transcription. Forms a tetrameric complex with XPO1/CRM1 and the nuclear import receptor importin. This complex blocks the central channel of host nuclear pores thereby inhibiting the receptor-mediated nuclear transport and thus the host mRNA and rRNA transcription. The inhibition of transcription is linked to a cytopathic effect on the host cell. Provides the signal sequence for the translocation of the precursor of protein E3/E2 to the host endoplasmic reticulum. Furin-cleaved E3 remains associated with spike glycoprotein E1 and mediates pH protection of the latter during the transport via the secretory pathway. After virion release from the host cell, the assembly protein E3 is gradually released in the extracellular space. In terms of biological role, plays an essential role in viral attachment to target host cell, by binding to the cell receptor PCDH10. Some specific strains may also bind host receptors VLDLR and LRP8/APOER2. Synthesized as a pE2 precursor which is processed by furin at the cell membrane just before virion budding, giving rise to E2-E1 heterodimer. The pE2-E1 heterodimer is stable, whereas E2-E1 is unstable and dissociate at low pH. pE2 is processed at the last step, presumably to avoid E1 fusion activation before its final export to cell surface. E2 C-terminus contains a transitory transmembrane that would be disrupted by palmitoylation, resulting in reorientation of the C-terminal tail from lumenal to cytoplasmic side. This step is critical since E2 C-terminus is involved in budding by interacting with capsid proteins. This release of E2 C-terminus in cytoplasm occurs lately in protein export, and precludes premature assembly of particles at the endoplasmic reticulum membrane. Its function is as follows. Protein 6K: Acts as a viroporin that participates in virus glycoprotein processing and transport to the plasma membrane, cell permeabilization and budding of viral particles. Disrupts the calcium homeostasis of the cell, probably at the endoplasmic reticulum level resulting in the increased levels of cytoplasmic calcium. Because of its lipophilic properties, the 6K protein is postulated to influence the selection of lipids that interact with the transmembrane domains of the glycoproteins, which, in turn, affects the deformability of the bilayer required for the extreme curvature that occurs as budding proceeds. Present in low amount in virions, about 3% compared to viral glycoproteins. Functionally, class II viral fusion protein. Fusion activity is inactive as long as E1 is bound to E2 in mature virion. After virus attachment to target cell receptor PCDH10 and endocytosis, acidification of the endosome induce dissociation of E1/E2 heterodimer and concomitant trimerization of the E1 subunits. This E1 trimer is fusion active, and promotes release of viral nucleocapsid in cytoplasm after endosome and viral membrane fusion. Efficient fusion requires the presence of cholesterol and sphingolipid in the target membrane. The chain is Structural polyprotein from Western equine encephalitis virus (WEEV).